A 373-amino-acid polypeptide reads, in one-letter code: Chaperone protein DnaJ (373 aa).

The region spanning 4–68 is the J domain; it reads NYYQILGVSK…QKRAAYDRLG (65 aa). The segment at 136 to 214 adopts a CR-type zinc-finger fold; it reads GIEKNINFSS…CHGMGRYHKQ (79 aa). The Zn(2+) site is built by Cys149, Cys152, Cys166, Cys169, Cys188, Cys191, Cys202, and Cys205. CXXCXGXG motif repeat units follow at residues 149-156, 166-173, 188-195, and 202-209; these read CDTCHGSG, CDACSGVG, CHKCQGNG, and CKKCHGMG.

This sequence belongs to the DnaJ family. Homodimer. Zn(2+) is required as a cofactor.

It is found in the cytoplasm. In terms of biological role, participates actively in the response to hyperosmotic and heat shock by preventing the aggregation of stress-denatured proteins and by disaggregating proteins, also in an autonomous, DnaK-independent fashion. Unfolded proteins bind initially to DnaJ; upon interaction with the DnaJ-bound protein, DnaK hydrolyzes its bound ATP, resulting in the formation of a stable complex. GrpE releases ADP from DnaK; ATP binding to DnaK triggers the release of the substrate protein, thus completing the reaction cycle. Several rounds of ATP-dependent interactions between DnaJ, DnaK and GrpE are required for fully efficient folding. Also involved, together with DnaK and GrpE, in the DNA replication of plasmids through activation of initiation proteins. The chain is Chaperone protein DnaJ from Rickettsia rickettsii (strain Iowa).